The following is a 229-amino-acid chain: Putative N-acetylmannosamine-6-phosphate 2-epimerase (229 aa).

The protein belongs to the NanE family.

The catalysed reaction is an N-acyl-D-glucosamine 6-phosphate = an N-acyl-D-mannosamine 6-phosphate. It participates in amino-sugar metabolism; N-acetylneuraminate degradation; D-fructose 6-phosphate from N-acetylneuraminate: step 3/5. Converts N-acetylmannosamine-6-phosphate (ManNAc-6-P) to N-acetylglucosamine-6-phosphate (GlcNAc-6-P). In Actinobacillus pleuropneumoniae serotype 5b (strain L20), this protein is Putative N-acetylmannosamine-6-phosphate 2-epimerase.